Consider the following 848-residue polypeptide: Protein translocase subunit SecA (848 aa).

ATP contacts are provided by residues glutamine 86, 104 to 108, and aspartate 508; that span reads GEGKT. 4 residues coordinate Zn(2+): cysteine 833, cysteine 835, cysteine 844, and cysteine 845.

It belongs to the SecA family. In terms of assembly, monomer and homodimer. Part of the essential Sec protein translocation apparatus which comprises SecA, SecYEG and auxiliary proteins SecDF. Other proteins may also be involved. Zn(2+) serves as cofactor.

The protein resides in the cell membrane. Its subcellular location is the cytoplasm. The enzyme catalyses ATP + H2O + cellular proteinSide 1 = ADP + phosphate + cellular proteinSide 2.. Part of the Sec protein translocase complex. Interacts with the SecYEG preprotein conducting channel. Has a central role in coupling the hydrolysis of ATP to the transfer of proteins into and across the cell membrane, serving as an ATP-driven molecular motor driving the stepwise translocation of polypeptide chains across the membrane. This chain is Protein translocase subunit SecA, found in Caldicellulosiruptor saccharolyticus (strain ATCC 43494 / DSM 8903 / Tp8T 6331).